A 296-amino-acid chain; its full sequence is Bifunctional protein FolD 1 (296 aa).

Residues 167–169 (GCG) and Ile235 each bind NADP(+).

This sequence belongs to the tetrahydrofolate dehydrogenase/cyclohydrolase family. As to quaternary structure, homodimer.

It carries out the reaction (6R)-5,10-methylene-5,6,7,8-tetrahydrofolate + NADP(+) = (6R)-5,10-methenyltetrahydrofolate + NADPH. It catalyses the reaction (6R)-5,10-methenyltetrahydrofolate + H2O = (6R)-10-formyltetrahydrofolate + H(+). It participates in one-carbon metabolism; tetrahydrofolate interconversion. Catalyzes the oxidation of 5,10-methylenetetrahydrofolate to 5,10-methenyltetrahydrofolate and then the hydrolysis of 5,10-methenyltetrahydrofolate to 10-formyltetrahydrofolate. This chain is Bifunctional protein FolD 1, found in Nocardioides sp. (strain ATCC BAA-499 / JS614).